A 257-amino-acid polypeptide reads, in one-letter code: Acetylglutamate kinase (257 aa).

Residues 43 to 44 (GG), Arg65, and Asn157 contribute to the substrate site. ATP is bound by residues 180–185 (DVSGIL) and 208–210 (IIT).

It belongs to the acetylglutamate kinase family. ArgB subfamily. In terms of assembly, homodimer.

The protein resides in the cytoplasm. The catalysed reaction is N-acetyl-L-glutamate + ATP = N-acetyl-L-glutamyl 5-phosphate + ADP. It functions in the pathway amino-acid biosynthesis; L-arginine biosynthesis; N(2)-acetyl-L-ornithine from L-glutamate: step 2/4. Its function is as follows. Catalyzes the ATP-dependent phosphorylation of N-acetyl-L-glutamate. The protein is Acetylglutamate kinase of Edwardsiella ictaluri (strain 93-146).